The sequence spans 262 residues: Tropinone reductase homolog At2g30670 (262 aa).

13 to 37 provides a ligand contact to NADP(+); sequence LVTGGASGIGHAIVEELAGLGARIY. Ser-146 is a binding site for substrate. The active-site Proton acceptor is Tyr-159.

This sequence belongs to the short-chain dehydrogenases/reductases (SDR) family. SDR65C subfamily.

The polypeptide is Tropinone reductase homolog At2g30670 (Arabidopsis thaliana (Mouse-ear cress)).